A 97-amino-acid polypeptide reads, in one-letter code: MLTREEVQHVAHLARLELTEEEEIQFTEQLADILAYVEQLKELDTEGVEPTFHVLDAELPTRPDQVEPYPNIEGILANAPDRADMFFKVPRILEGED.

This sequence belongs to the GatC family. Heterotrimer of A, B and C subunits.

The catalysed reaction is L-glutamyl-tRNA(Gln) + L-glutamine + ATP + H2O = L-glutaminyl-tRNA(Gln) + L-glutamate + ADP + phosphate + H(+). The enzyme catalyses L-aspartyl-tRNA(Asn) + L-glutamine + ATP + H2O = L-asparaginyl-tRNA(Asn) + L-glutamate + ADP + phosphate + 2 H(+). Allows the formation of correctly charged Asn-tRNA(Asn) or Gln-tRNA(Gln) through the transamidation of misacylated Asp-tRNA(Asn) or Glu-tRNA(Gln) in organisms which lack either or both of asparaginyl-tRNA or glutaminyl-tRNA synthetases. The reaction takes place in the presence of glutamine and ATP through an activated phospho-Asp-tRNA(Asn) or phospho-Glu-tRNA(Gln). This Synechococcus sp. (strain JA-3-3Ab) (Cyanobacteria bacterium Yellowstone A-Prime) protein is Aspartyl/glutamyl-tRNA(Asn/Gln) amidotransferase subunit C.